A 506-amino-acid chain; its full sequence is Protein MGF 505-9R (506 aa).

ANK repeat units lie at residues 54 to 83, 253 to 283, and 313 to 343; these read PTHK…SLQY, QVDT…ETVE, and FVKK…KINL.

Belongs to the asfivirus MGF 505 family.

Plays a role in virus cell tropism, and may be required for efficient virus replication in macrophages. The sequence is that of Protein MGF 505-9R from Ornithodoros (relapsing fever ticks).